Here is a 182-residue protein sequence, read N- to C-terminus: Ribosomal RNA small subunit methyltransferase G (182 aa).

S-adenosyl-L-methionine-binding positions include glycine 58, phenylalanine 63, 109–110 (IE), and arginine 123.

It belongs to the methyltransferase superfamily. RNA methyltransferase RsmG family.

The protein resides in the cytoplasm. The catalysed reaction is guanosine(527) in 16S rRNA + S-adenosyl-L-methionine = N(7)-methylguanosine(527) in 16S rRNA + S-adenosyl-L-homocysteine. Specifically methylates the N7 position of guanine in position 527 of 16S rRNA. In Campylobacter fetus subsp. fetus (strain 82-40), this protein is Ribosomal RNA small subunit methyltransferase G.